Consider the following 400-residue polypeptide: MRDVFICDAIRTPIGRFGGALAGVRADDLAAVPLKALIEPNPAVQWDQVDEVFFGCANQAGEDNRNVARMALLLAGLPESIPGVTLNRLCASGMDAIGTAFRAIASGEMELAIAGGVESMSRAPFVMGKAESGYSRNMKLEDTTIGWRFINPLMKSQYGVDSMPETADNVADDYQVSRADQDAFALRSQQKAAAAQAAGFFAEEIVPVRIAHKKGETIVERDEHLRPETTLEALTKLKPVNGPDKTVTAGNASGVNDGAAALILASAEAVKKHGLTPRARVLGMASGGVAPRVMGIGPVPAVRKLTERLGVAVSDFDVIELNEAFASQGLAVLRELGVADDAPQVNPNGGAIALGHPLGMSGARLVLTALHQLEKSGGRKGLATMCVGVGQGLALAIERV.

Cys-90 acts as the Acyl-thioester intermediate in catalysis. Residues His-356 and Cys-386 each act as proton acceptor in the active site.

This sequence belongs to the thiolase-like superfamily. Thiolase family.

It carries out the reaction succinyl-CoA + acetyl-CoA = 3-oxoadipyl-CoA + CoA. The protein operates within aromatic compound metabolism; beta-ketoadipate pathway; acetyl-CoA and succinyl-CoA from 3-oxoadipate: step 2/2. In terms of biological role, catalyzes thiolytic cleavage of beta-ketoadipyl-CoA to succinyl-CoA and acetyl-CoA. This chain is Beta-ketoadipyl-CoA thiolase (pcaF), found in Pseudomonas putida (Arthrobacter siderocapsulatus).